Reading from the N-terminus, the 33-residue chain is Ferredoxin (33 aa).

The 2Fe-2S ferredoxin-type domain maps to 3 to 33; sequence KYKVRLLSEAEGIDVTIDSADDVYILDAAEE.

This sequence belongs to the 2Fe2S plant-type ferredoxin family. The cofactor is [2Fe-2S] cluster.

It is found in the plastid. Its subcellular location is the chloroplast. Ferredoxins are iron-sulfur proteins that transfer electrons in a wide variety of metabolic reactions. This chain is Ferredoxin, found in Porphyridium aerugineum (Red microalga).